A 480-amino-acid chain; its full sequence is Adenosylhomocysteinase (480 aa).

Substrate contacts are provided by Thr-63, Asp-142, and Glu-203. Residue 204–206 (TTT) participates in NAD(+) binding. Substrate contacts are provided by Lys-233 and Asp-237. Residues Asn-238, 267-272 (GYGDVG), Glu-290, Asn-325, 346-348 (IGH), and Asn-394 each bind NAD(+).

Belongs to the adenosylhomocysteinase family. NAD(+) serves as cofactor.

Its subcellular location is the cytoplasm. It catalyses the reaction S-adenosyl-L-homocysteine + H2O = L-homocysteine + adenosine. Its pathway is amino-acid biosynthesis; L-homocysteine biosynthesis; L-homocysteine from S-adenosyl-L-homocysteine: step 1/1. Functionally, may play a key role in the regulation of the intracellular concentration of adenosylhomocysteine. In Xanthomonas axonopodis pv. citri (strain 306), this protein is Adenosylhomocysteinase.